The sequence spans 1278 residues: NPC intracellular cholesterol transporter 1 (1278 aa).

The N-terminal stretch at 1–22 (MTARGLALGLLLLLLCPAQVFS) is a signal peptide. Residues 23–261 (QSCVWYGECG…QPPPPPAPWT (239 aa)) are Lumenal-facing. Intrachain disulfides connect Cys25-Cys74, Cys31-Cys42, Cys63-Cys109, Cys75-Cys113, Cys97-Cys238, Cys100-Cys160, Cys177-Cys184, Cys227-Cys243, and Cys240-Cys247. Asn41 serves as a coordination point for cholesterol. N-linked (GlcNAc...) asparagine glycosylation is present at Asn70. A cholesterol-binding site is contributed by Gln79. Asn122 and Asn135 each carry an N-linked (GlcNAc...) asparagine glycan. Asn158 carries N-linked (GlcNAc...) asparagine; atypical glycosylation. The tract at residues 175–205 (LLCGKDADACNATNWIEYMFNKDNGQAPFTI) is important for cholesterol binding and cholesterol transfer from NPC1 to liposomes. N-linked (GlcNAc...) asparagine glycosylation is found at Asn185 and Asn222. The helical transmembrane segment at 262-282 (ILGLDAMYVIMWITYMAFLLV) threads the bilayer. The Cytoplasmic segment spans residues 283–350 (FFGAFFAVWC…RWGSFCVRNP (68 aa)). The helical transmembrane segment at 351–371 (GCVIFFSLVFITACSSGLVFV) threads the bilayer. Over 372–620 (RVTTNPVDLW…DELNRESDSD (249 aa)) the chain is Lumenal. N-linked (GlcNAc...) asparagine glycans are attached at residues Asn452, Asn459, Asn478, Asn524, Asn557, Asn572, and Asn598. 2 cysteine pairs are disulfide-bonded: Cys468–Cys479 and Cys516–Cys533. Residues 620–785 (DVFTVVISYA…ITCFVSLLGL (166 aa)) form the SSD domain. Residues 621–641 (VFTVVISYAIMFLYISLALGH) form a helical membrane-spanning segment. At 642–653 (MKSCRRLLVDSK) the chain is on the cytoplasmic side. The helical transmembrane segment at 654-675 (VSLGIAGILIVLSSVACSLGVF) threads the bilayer. Residues 676–685 (SYIGLPLTLI) are Lumenal-facing. A helical transmembrane segment spans residues 686–706 (VIEVIPFLVLAVGVDNIFILV). Residues 707-730 (QAYQRDERLQGETLDQQLGRVLGE) lie on the Cytoplasmic side of the membrane. A helical transmembrane segment spans residues 731-751 (VAPSMFLSSFSETVAFFLGAL). The Lumenal segment spans residues 752 to 759 (SVMPAVHT). A helical transmembrane segment spans residues 760-783 (FSLFAGLAVFIDFLLQITCFVSLL). The Cytoplasmic segment spans residues 784-832 (GLDIKRQEKNRLDIFCCVRGAEDGTSVQASESCLFRFFKNSYSPLLLKD). Residues 833-853 (WMRPIVIAIFVGVLSFSIAVL) form a helical membrane-spanning segment. Residues 854 to 1097 (NKVDIGLDQS…YEQYLTIIDD (244 aa)) lie on the Lumenal side of the membrane. An intrachain disulfide couples Cys909 to Cys914. Residues Asn916, Asn931, Asn961, Asn968, Asn1064, and Asn1072 are each glycosylated (N-linked (GlcNAc...) asparagine). 3 cysteine pairs are disulfide-bonded: Cys956–Cys1011, Cys957–Cys979, and Cys967–Cys976. Residues 1098-1118 (TIFNLGVSLGAIFLVTMVLLG) traverse the membrane as a helical segment. The Cytoplasmic segment spans residues 1119–1124 (CELWSA). Residues 1125–1145 (VIMCATIAMVLVNMFGVMWLW) traverse the membrane as a helical segment. The Lumenal segment spans residues 1146-1150 (GISLN). Residues 1151–1171 (AVSLVNLVMSCGISVEFCSHI) traverse the membrane as a helical segment. Over 1172–1194 (TRAFTVSMKGSRVERAEEALAHM) the chain is Cytoplasmic. A helical membrane pass occupies residues 1195-1215 (GSSVFSGITLTKFGGIVVLAF). Residues 1216-1223 (AKSQIFQI) are Lumenal-facing. The chain crosses the membrane as a helical span at residues 1224-1244 (FYFRMYLAMVLLGATHGLIFL). The Cytoplasmic segment spans residues 1245-1278 (PVLLSYIGPSVNKAKSCATEERYKGTERERLLNF). Residues 1275 to 1278 (LLNF) are required for location in lysosomes. Positions 1275–1278 (LLNF) match the Di-leucine motif motif.

This sequence belongs to the patched family. Interacts (via the second lumenal domain) with NPC2. Interacts with TMEM97; the interaction may decrease NPC1 availability to the cell. Interacts with TIM1. Interacts with SLC38A9; this interaction inhibits cholesterol-mediated mTORC1 activation via its sterol transport activity. In terms of assembly, (Microbial infection) Interacts with ebolavirus glycoprotein. In terms of processing, N-glycosylated.

The protein localises to the late endosome membrane. It localises to the lysosome membrane. The enzyme catalyses cholesterol(in) = cholesterol(out). Functionally, intracellular cholesterol transporter which acts in concert with NPC2 and plays an important role in the egress of cholesterol from the endosomal/lysosomal compartment. Unesterified cholesterol that has been released from LDLs in the lumen of the late endosomes/lysosomes is transferred by NPC2 to the cholesterol-binding pocket in the N-terminal domain of NPC1. Cholesterol binds to NPC1 with the hydroxyl group buried in the binding pocket. Binds oxysterol with higher affinity than cholesterol. May play a role in vesicular trafficking in glia, a process that may be crucial for maintaining the structural and functional integrity of nerve terminals. Inhibits cholesterol-mediated mTORC1 activation throught its interaction with SLC38A9. (Microbial infection) Acts as an endosomal entry receptor for ebolavirus. The sequence is that of NPC intracellular cholesterol transporter 1 from Homo sapiens (Human).